The chain runs to 363 residues: 3-isopropylmalate dehydrogenase (363 aa).

Position 79–92 (79–92 (GPKWEHLPPNEQPE)) interacts with NAD(+). Residues arginine 100, arginine 110, arginine 139, and aspartate 228 each contribute to the substrate site. Residues aspartate 228, aspartate 252, and aspartate 256 each contribute to the Mg(2+) site. 286–298 (GSAPDIAGKNIAN) serves as a coordination point for NAD(+).

This sequence belongs to the isocitrate and isopropylmalate dehydrogenases family. LeuB type 1 subfamily. In terms of assembly, homodimer. It depends on Mg(2+) as a cofactor. Mn(2+) serves as cofactor.

It localises to the cytoplasm. The catalysed reaction is (2R,3S)-3-isopropylmalate + NAD(+) = 4-methyl-2-oxopentanoate + CO2 + NADH. The protein operates within amino-acid biosynthesis; L-leucine biosynthesis; L-leucine from 3-methyl-2-oxobutanoate: step 3/4. Catalyzes the oxidation of 3-carboxy-2-hydroxy-4-methylpentanoate (3-isopropylmalate) to 3-carboxy-4-methyl-2-oxopentanoate. The product decarboxylates to 4-methyl-2 oxopentanoate. The polypeptide is 3-isopropylmalate dehydrogenase (Vibrio cholerae serotype O1 (strain ATCC 39315 / El Tor Inaba N16961)).